The primary structure comprises 265 residues: UPF0354 protein BH3252 (265 aa).

This sequence belongs to the UPF0354 family.

The sequence is that of UPF0354 protein BH3252 from Halalkalibacterium halodurans (strain ATCC BAA-125 / DSM 18197 / FERM 7344 / JCM 9153 / C-125) (Bacillus halodurans).